A 346-amino-acid polypeptide reads, in one-letter code: Putative [LysW]-L-2-aminoadipate/[LysW]-L-glutamate phosphate reductase (346 aa).

12–15 is a binding site for NADP(+); sequence SGFT. C147 is a catalytic residue. The interval 178–198 is disordered; it reads GSSEGGAGGGDASSHPERSGV. N310 provides a ligand contact to NADP(+).

The protein belongs to the NAGSA dehydrogenase family. Type 1 subfamily. LysY sub-subfamily.

The protein localises to the cytoplasm. The catalysed reaction is [amino-group carrier protein]-C-terminal-N-(1-carboxy-5-oxopentan-1-yl)-L-glutamine + phosphate + NADP(+) = [amino-group carrier protein]-C-terminal-N-(1-carboxy-5-phosphooxy-5-oxopentan-1-yl)-L-glutamine + NADPH + H(+). It catalyses the reaction [amino-group carrier protein]-C-terminal-gamma-(L-glutamyl-5-semialdehyde)-L-glutamate + phosphate + NADP(+) = [amino-group carrier protein]-C-terminal-gamma-(5-phospho-L-glutamyl)-L-glutamate + NADPH + H(+). It functions in the pathway amino-acid biosynthesis; L-lysine biosynthesis via AAA pathway; L-lysine from L-alpha-aminoadipate (Thermus route): step 3/5. It participates in amino-acid biosynthesis; L-arginine biosynthesis. Functionally, involved in both the arginine and lysine biosynthetic pathways. This Haloquadratum walsbyi (strain DSM 16790 / HBSQ001) protein is Putative [LysW]-L-2-aminoadipate/[LysW]-L-glutamate phosphate reductase.